Reading from the N-terminus, the 287-residue chain is MEIGLREWLIVIGIIVIAGILFDGWRRMRGGKGKLKFRLDRNLSNLPDDDGSAELLGPPRVLDTHKEPQLDEHDLPSMSAPVREAREPSSKRGKRANAGVAEPHQGDLNLDVDEGPSFSSRDDDFPDENAGKNAPRQSVNDQPPAEEVLVISVICRDAAGFKGPALLQNILESGLRFGEMDIFHRHESMAGNGEVLFSMANAVKPGTFDLDDIDLFSTPAVSFFLGLPGPRHPKQAFDVMVAAARKLSQELNGELKDDQRSVLTAQTIEHYRQRIVEFERRALTQKR.

Residue M1 is a topological domain, periplasmic. A helical membrane pass occupies residues 2–22; the sequence is EIGLREWLIVIGIIVIAGILF. The Cytoplasmic portion of the chain corresponds to 23–287; it reads DGWRRMRGGK…FERRALTQKR (265 aa). The disordered stretch occupies residues 70–143; the sequence is LDEHDLPSMS…APRQSVNDQP (74 aa).

Belongs to the ZipA family. In terms of assembly, interacts with FtsZ via their C-terminal domains.

The protein localises to the cell inner membrane. Functionally, essential cell division protein that stabilizes the FtsZ protofilaments by cross-linking them and that serves as a cytoplasmic membrane anchor for the Z ring. Also required for the recruitment to the septal ring of downstream cell division proteins. In Pseudomonas fluorescens (strain SBW25), this protein is Cell division protein ZipA.